Consider the following 565-residue polypeptide: Probable beta-glucosidase btgE (565 aa).

Residues 1–18 (MRGAILATAAALAGTAMA) form the signal peptide. Residues 246–304 (TGQDEPTSAPAAPSTTAVPATTTAAPETTTAAPDTTTAVPSTSSAAPSSSSTAPASTGA) form a disordered region. Residues 251-304 (PTSAPAAPSTTAVPATTTAAPETTTAAPDTTTAVPSTSSAAPSSSSTAPASTGA) are compositionally biased toward low complexity. Glu-405 (proton donor) is an active-site residue. The active-site Nucleophile is the Glu-501.

The protein belongs to the glycosyl hydrolase 17 family.

It localises to the secreted. It is found in the cell wall. The catalysed reaction is Hydrolysis of terminal, non-reducing beta-D-glucosyl residues with release of beta-D-glucose.. Its pathway is glycan metabolism; cellulose degradation. Beta-glucosidases are one of a number of cellulolytic enzymes involved in the degradation of cellulosic biomass. Catalyzes the last step releasing glucose from the inhibitory cellobiose. This Aspergillus fumigatus (strain CBS 144.89 / FGSC A1163 / CEA10) (Neosartorya fumigata) protein is Probable beta-glucosidase btgE (btgE).